The sequence spans 501 residues: MRIVWKLFGFSRRLLQVEWCHPSESILLFTLVPRLRKAPSVFLLGQRQGLSTMPEIEASVRDSELFSPPSDVRGMRELDRTAFKKTVSIPVLKARKEVVNRLMRALRRVALQRPGIKRVIEDPKDEDSRLIMLDPYRMLTADSFDKAELGVLKELDVSPQLSQYNLELTYENFKSEEILKAVLPEGQDVTSGFSRVGHIAHLNLRDHQLPFKHLIGQVMVDKNPGITSAVNKTSNIDNTYRNFQMEVLCGEENMLTKVRENNYTYEFDFSKVYWNPRLSTEHGRITELLNPGDVLFDVFAGVGPFAIPAARKNCTVFANDLNPESHKWLLHNCKLNKVDQKVKVFNMDGKDFIQGPVREELMLRLGLSAEAKPSVHIVMNLPAKAIEFLSVFRSLLDGQPCSTELLPTVHCYCFSKDSDPAKDVRQQAEAVLGVSLETSSSVHLVRNVAPNKEMLCITFQIPTATLYRNQSLSLQNDQEPPLKRQKTGDPFSGEPQIASDS.

S-adenosyl-L-methionine-binding positions include histidine 282, 320 to 321, 348 to 349, and asparagine 380; these read DL and DG. The interval 474–501 is disordered; that stretch reads LQNDQEPPLKRQKTGDPFSGEPQIASDS.

The protein belongs to the class I-like SAM-binding methyltransferase superfamily. TRM5/TYW2 family. As to quaternary structure, monomer.

Its subcellular location is the mitochondrion matrix. It localises to the nucleus. It is found in the cytoplasm. It carries out the reaction guanosine(37) in tRNA + S-adenosyl-L-methionine = N(1)-methylguanosine(37) in tRNA + S-adenosyl-L-homocysteine + H(+). In terms of biological role, involved in mitochondrial tRNA methylation. Specifically methylates the N1 position of guanosine-37 in various tRNAs. Methylation is not dependent on the nature of the nucleoside 5' of the target nucleoside. This is the first step in the biosynthesis of wybutosine (yW), a modified base adjacent to the anticodon of tRNAs and required for accurate decoding. This chain is tRNA (guanine(37)-N(1))-methyltransferase (Trmt5), found in Mus musculus (Mouse).